The sequence spans 135 residues: Small ribosomal subunit protein uS9 (135 aa).

The interval 96-135 (SADNRKPLKTEGHLSRDPRAKERRKYGLKKARKAPQFSKR) is disordered. Residues 97-115 (ADNRKPLKTEGHLSRDPRA) show a composition bias toward basic and acidic residues. Residues 116-135 (KERRKYGLKKARKAPQFSKR) are compositionally biased toward basic residues.

This sequence belongs to the universal ribosomal protein uS9 family.

The polypeptide is Small ribosomal subunit protein uS9 (Prochlorococcus marinus (strain MIT 9313)).